The primary structure comprises 482 residues: Arginine/ornithine antiporter (482 aa).

Residues 1–10 (MSQESSQKLR) lie on the Cytoplasmic side of the membrane. A helical membrane pass occupies residues 11 to 31 (LGALTALVVGSMIGGGIFSLP). Residues 32-40 (QNMAASADV) are Periplasmic-facing. Residues 41–61 (GAVLIGWAITAVGMLTLAFVF) form a helical membrane-spanning segment. Residues 62–100 (QTLANRKPELDGGVYAYAKAGFGDYMGFSSAWGYWISAW) are Cytoplasmic-facing. The helical transmembrane segment at 101 to 121 (LGNVGYFVLLFSTLGYFFPIF) threads the bilayer. Residues 122–124 (GKG) are Periplasmic-facing. Residues 125 to 145 (DTVAAIVCASVLLWALHFLVL) traverse the membrane as a helical segment. Topologically, residues 146–156 (RGIKEAAFINT) are cytoplasmic. The helical transmembrane segment at 157–177 (VTTVAKVVPLFLFILICLFAF) threads the bilayer. Residues 178 to 202 (KLDIFTADIWGKSNPDLGSVMNQVR) lie on the Periplasmic side of the membrane. The chain crosses the membrane as a helical span at residues 203 to 223 (NMMLVTVWVFIGIEGASIFSS). Topologically, residues 224 to 235 (RAEKRSDVGKAT) are cytoplasmic. Residues 236–256 (VIGFITVLLLLVLVNVLSMGV) form a helical membrane-spanning segment. At 257-283 (MTQPELAKLQNPSMALVLEHVVGHWGA) the chain is on the periplasmic side. Residues 284–304 (VLISVGLLISLLGALLSWVLL) form a helical membrane-spanning segment. At 305 to 333 (CAEIMFAAAKDHTMPEFLRRENANQVPAN) the chain is on the cytoplasmic side. A helical membrane pass occupies residues 334–354 (ALWLTNICVQVFLVVVFFTSG). Topologically, residues 355–365 (DPDGMDPYTKM) are periplasmic. The chain crosses the membrane as a helical span at residues 366 to 386 (LLLATSMILIPYFWSAAYGLL). Topologically, residues 387–403 (LTLKGETYENDARERSK) are cytoplasmic. The helical transmembrane segment at 404–424 (DLVIAGIAVAYAVWLLYAGGL) threads the bilayer. K425 is a topological domain (periplasmic). The chain crosses the membrane as a helical span at residues 426–446 (YLLLSALLYAPGAILFAKAKH). Residues 447–458 (EVGQPIFTGIEK) are Cytoplasmic-facing. The helical transmembrane segment at 459–479 (LIFAAVVIGALVAAYGLYDGF) threads the bilayer. Topologically, residues 480-482 (LTL) are periplasmic.

The protein belongs to the amino acid-polyamine-organocation (APC) superfamily. Basic amino acid/polyamine antiporter (APA) (TC 2.A.3.2) family.

It localises to the cell inner membrane. It catalyses the reaction L-ornithine(in) + L-arginine(out) = L-ornithine(out) + L-arginine(in). Catalyzes electroneutral exchange between arginine and ornithine to allow high-efficiency energy conversion in the arginine deiminase pathway. Also mediates the proton motive force-driven uptake of arginine and ornithine, but the exchange is several orders of magnitude faster than the proton motive force-driven transport. This chain is Arginine/ornithine antiporter, found in Pseudomonas aeruginosa (strain ATCC 15692 / DSM 22644 / CIP 104116 / JCM 14847 / LMG 12228 / 1C / PRS 101 / PAO1).